A 325-amino-acid polypeptide reads, in one-letter code: Glutarate 2-hydroxylase (325 aa).

Fe cation contacts are provided by His-160, Asp-162, and His-292.

Belongs to the glutarate hydroxylase family. As to quaternary structure, homotetramer. Fe(2+) serves as cofactor.

It catalyses the reaction glutarate + 2-oxoglutarate + O2 = (S)-2-hydroxyglutarate + succinate + CO2. Its pathway is amino-acid degradation. Functionally, acts as an alpha-ketoglutarate-dependent dioxygenase catalyzing hydroxylation of glutarate (GA) to L-2-hydroxyglutarate (L2HG). Functions in a L-lysine degradation pathway that proceeds via cadaverine, glutarate and L-2-hydroxyglutarate. This chain is Glutarate 2-hydroxylase, found in Escherichia coli O6:H1 (strain CFT073 / ATCC 700928 / UPEC).